Reading from the N-terminus, the 165-residue chain is Crossover junction endodeoxyribonuclease RuvC (165 aa).

Catalysis depends on residues Asp8, Glu67, and Asp139. Positions 8, 67, and 139 each coordinate Mg(2+).

The protein belongs to the RuvC family. Homodimer which binds Holliday junction (HJ) DNA. The HJ becomes 2-fold symmetrical on binding to RuvC with unstacked arms; it has a different conformation from HJ DNA in complex with RuvA. In the full resolvosome a probable DNA-RuvA(4)-RuvB(12)-RuvC(2) complex forms which resolves the HJ. It depends on Mg(2+) as a cofactor.

Its subcellular location is the cytoplasm. The catalysed reaction is Endonucleolytic cleavage at a junction such as a reciprocal single-stranded crossover between two homologous DNA duplexes (Holliday junction).. Its function is as follows. The RuvA-RuvB-RuvC complex processes Holliday junction (HJ) DNA during genetic recombination and DNA repair. Endonuclease that resolves HJ intermediates. Cleaves cruciform DNA by making single-stranded nicks across the HJ at symmetrical positions within the homologous arms, yielding a 5'-phosphate and a 3'-hydroxyl group; requires a central core of homology in the junction. The consensus cleavage sequence is 5'-(A/T)TT(C/G)-3'. Cleavage occurs on the 3'-side of the TT dinucleotide at the point of strand exchange. HJ branch migration catalyzed by RuvA-RuvB allows RuvC to scan DNA until it finds its consensus sequence, where it cleaves and resolves the cruciform DNA. In Alkalilimnicola ehrlichii (strain ATCC BAA-1101 / DSM 17681 / MLHE-1), this protein is Crossover junction endodeoxyribonuclease RuvC.